The sequence spans 107 residues: Protein KleE (107 aa).

In Escherichia coli, this protein is Protein KleE (kleE).